Reading from the N-terminus, the 247-residue chain is 14-3-3 protein gamma (247 aa).

M1 is subject to N-acetylmethionine. V2 bears the N-acetylvaline; in 14-3-3 protein gamma, N-terminally processed mark. Positions V2 to N247 are interaction with SPATA18/MIEAP. At S71 the chain carries Phosphoserine. Phosphotyrosine is present on Y133. T145 carries the phosphothreonine modification. S215 carries the post-translational modification Phosphoserine. T234 carries the phosphothreonine modification. Residue S235 is modified to Phosphoserine.

Belongs to the 14-3-3 family. Homodimer. Part of a complex that contains DSG3, PKP1, YAP1 and YWHAG; the complex is required for localization of DSG3 and YAP1 to the cell membrane in keratinocytes. Interacts with SAMSN1. Interacts with RAF1, SSH1 and CRTC2/TORC2. Interacts with ABL1 (phosphorylated form); the interaction retains it in the cytoplasm. Interacts with GAB2. Interacts with MDM4 (phosphorylated); negatively regulates MDM4 activity toward TP53. Interacts with PKA-phosphorylated AANAT and SIRT2. Interacts with the 'Thr-369' phosphorylated form of DAPK2. Interacts with PI4KB, TBC1D22A and TBC1D22B. Interacts with SLITRK1. Interacts with LRRK2; this interaction is dependent on LRRK2 phosphorylation. Interacts with MARK2 and MARK3. Interacts with MEFV. Interacts with ENDOG, TSC2 and PIK3C3; interaction with ENDOG weakens its interaction with TSC2 and PIK3C3. Interacts with (phosphorylated) WDR24. Interacts with BEST1; this interaction promotes L-glutamate channel activity leading to the positive regulation of NMDA glutamate receptor activity through the L-glutamate secretion. Interacts with PKP1 (when phosphorylated); the interaction results in translocation of PKP1 to the cytoplasm and loss of intercellular adhesion in keratinocytes. Interacts with SPATA18/MIEAP; a protein that also plays a role in MALM. Phosphorylated by various PKC isozymes.

Its subcellular location is the cytoplasm. It localises to the cytosol. It is found in the mitochondrion matrix. Its function is as follows. Adapter protein implicated in the regulation of a large spectrum of both general and specialized signaling pathways. Binds to a large number of partners, usually by recognition of a phosphoserine or phosphothreonine motif. Binding generally results in the modulation of the activity of the binding partner. Promotes inactivation of WDR24 component of the GATOR2 complex by binding to phosphorylated WDR24. Participates in the positive regulation of NMDA glutamate receptor activity by promoting the L-glutamate secretion through interaction with BEST1. Reduces keratinocyte intercellular adhesion, via interacting with PKP1 and sequestering it in the cytoplasm, thereby reducing its incorporation into desmosomes. Plays a role in mitochondrial protein catabolic process (also named MALM) that promotes the degradation of damaged proteins inside mitochondria. The chain is 14-3-3 protein gamma from Bos taurus (Bovine).